We begin with the raw amino-acid sequence, 716 residues long: Tensin-4 (716 aa).

Residues 1 to 17 (MSQVMSSPLLAGGPAVG) form the signal peptide. 4 disordered regions span residues 119–274 (LPPG…VSML), 301–322 (QSSS…NLGP), 334–366 (VPSN…PSIT), and 379–436 (GFPE…RDMQ). The segment covering 138-150 (KKKEEPEALDIKY) has biased composition (basic and acidic residues). A compositionally biased stretch (polar residues) spans 197-206 (SSESLIFSGS). Pro residues predominate over residues 214 to 228 (PAPPSAVPSSHPPTS). Serine 248 carries the post-translational modification Phosphoserine. The segment covering 265–274 (PQLSSRVSML) has biased composition (polar residues). Positions 402–419 (ATSSSMPCPATRSHSQTL) are enriched in polar residues. An SH2 domain is found at 449–556 (WFKPSISREQ…ALPCKLVIPQ (108 aa)). In terms of domain architecture, PTB spans 583-704 (CHALYLSSVS…TLQPASQVIR (122 aa)).

Belongs to the PTEN phosphatase protein family. As to quaternary structure, interacts (via SH2 domain) with Rho GTPase-activating protein DLC1 (via C-terminus); the interaction is independent of DLC1 tyrosine phosphorylation. Interacts with integrin ITGB1; the interaction displaces tensin TNS3 from the ITGB1 cytoplasmic tail and promotes ITGB1 stability. Interacts (via SH2 domain) with E3 ubiquitin-protein ligase CBL (phosphorylated on 'Tyr-782'); the interaction is enhanced in the presence of EGF and reduces interaction of CBL with EGFR. Interacts (via SH2 domain) with receptor tyrosine kinase MET (when phosphorylated); the interaction increases MET protein stability.

The protein resides in the cell junction. It is found in the focal adhesion. The protein localises to the cytoplasm. Its subcellular location is the cytoskeleton. In terms of biological role, promotes EGF-induced cell migration by displacing tensin TNS3 from the cytoplasmic tail of integrin ITGB1 which results in dissociation of TNS3 from focal adhesions, disassembly of actin stress fibers and initiation of cell migration. Suppresses ligand-induced degradation of EGFR by reducing EGFR ubiquitination in the presence of EGF. Increases MET protein stability by inhibiting MET endocytosis and subsequent lysosomal degradation which leads to increased cell survival, proliferation and migration. In Bos taurus (Bovine), this protein is Tensin-4 (TNS4).